The following is a 205-amino-acid chain: Adenylyl-sulfate kinase (205 aa).

Gly-31–Ser-38 is a binding site for ATP. Catalysis depends on Ser-105, which acts as the Phosphoserine intermediate.

This sequence belongs to the APS kinase family.

It carries out the reaction adenosine 5'-phosphosulfate + ATP = 3'-phosphoadenylyl sulfate + ADP + H(+). It functions in the pathway sulfur metabolism; hydrogen sulfide biosynthesis; sulfite from sulfate: step 2/3. Catalyzes the synthesis of activated sulfate. In Shewanella denitrificans (strain OS217 / ATCC BAA-1090 / DSM 15013), this protein is Adenylyl-sulfate kinase.